A 242-amino-acid polypeptide reads, in one-letter code: Acetoacetyl-CoA reductase (242 aa).

NADP(+)-binding positions include 12-14 and 82-86; these read RGI and NAGIT. Residues Asp88 and 141–144 contribute to the substrate site; that span reads QAGQ. Tyr147 (proton acceptor) is an active-site residue. 177 to 180 is a binding site for NADP(+); it reads PGYI. Substrate is bound at residue 178-179; that stretch reads GY.

It belongs to the short-chain dehydrogenases/reductases (SDR) family.

The protein localises to the cytoplasm. It carries out the reaction a (3R)-3-hydroxyacyl-CoA + NADP(+) = a 3-oxoacyl-CoA + NADPH + H(+). It participates in biopolymer metabolism; poly-(R)-3-hydroxybutanoate biosynthesis. The polypeptide is Acetoacetyl-CoA reductase (phaB) (Paracoccus denitrificans).